We begin with the raw amino-acid sequence, 85 residues long: Keratin-associated protein 7-1 (85 aa).

The interval 37–82 is 12 X 2 AA repeats of G-[YCGS]; it reads GSPLGYGCNGYSSLGYGFGGSSFSNLGCGYGGSFYRPWGSGSGFGY.

Belongs to the KRTAP type 7 family. In terms of assembly, interacts with wool keratins. In terms of tissue distribution, wool.

In terms of biological role, in the wool cortex, wool keratin intermediate filaments are embedded in an interfilamentous matrix, consisting of hair keratin-associated proteins (KRTAP), which are essential for the formation of a rigid and resistant wool shaft through their extensive disulfide bond cross-linking with abundant cysteine residues of wool keratins. The matrix proteins include the high-sulfur and high-glycine-tyrosine keratins. The chain is Keratin-associated protein 7-1 (KRTAP7-1) from Ovis aries (Sheep).